We begin with the raw amino-acid sequence, 125 residues long: Multifunctional methyltransferase subunit TRM112-like protein (125 aa).

Positions 2 to 119 constitute a TRM112 domain; that stretch reads RLLTHNLLSS…SRGIPNMLLS (118 aa). Residue Ser119 is modified to Phosphoserine.

This sequence belongs to the TRM112 family. As to quaternary structure, part of the heterodimeric BUD23-TRM112 methyltransferase complex; this heterodimerization is necessary for the metabolic stability and activity of the catalytic subunit BUD23. Part of the heterodimeric N6AMT1-TRM112 methyltransferase complex; this heterodimerization is necessary for S-adenosyl-L-methionine-binding to N6AMT1/HEMK2. Part of the heterodimeric ALKBH8-TRM112 methyltransferase complex. Part of the heterodimeric METTL5-TRM112 methyltransferase complex; this heterodimerization is necessary for the stability of the catalytic subunit METTL5. Part of the heterodimeric THUMPD3-TRM112 methyltransferase complex; this complex forms an active tRNA methyltransferase, where TRMT112 acts as an activator of the catalytic subunit THUMPD3. Part of the heterodimeric THUMPD2-TRM112 methyltransferase complex; this complex forms an active tRNA methyltransferase, where TRMT112 acts as an activator of the catalytic subunit THUMPD2. Part of the heterodimeric TRMT11-TRM112 methyltransferase complex; this complex forms an active tRNA methyltransferase, where TRMT112 acts as an activator of the catalytic subunit TRMT11.

The protein localises to the nucleus. It localises to the nucleoplasm. Its subcellular location is the cytoplasm. It is found in the perinuclear region. In terms of biological role, acts as an activator of both rRNA/tRNA and protein methyltransferases. Together with methyltransferase BUD23, methylates the N(7) position of a guanine in 18S rRNA. The heterodimer with HEMK2/N6AMT1 catalyzes N5-methylation of ETF1 on 'Gln-185', using S-adenosyl L-methionine as methyl donor. The heterodimer with ALKBH8 catalyzes the methylation of 5-carboxymethyl uridine to 5-methylcarboxymethyl uridine at the wobble position of the anticodon loop in target tRNA species. Together with methyltransferase THUMPD3, catalyzes the formation of N(2)-methylguanosine at position 6 in a broad range of tRNA substrates and at position 7 of tRNA(Trp). Involved in the pre-rRNA processing steps leading to small-subunit rRNA production. Together with methyltransferase METTL5, specifically methylates the 6th position of adenine in position 1832 of 18S rRNA. The protein is Multifunctional methyltransferase subunit TRM112-like protein (TRMT112) of Bos taurus (Bovine).